A 384-amino-acid chain; its full sequence is Cell division protein FtsZ (384 aa).

Residues 20–24 (GGGSN), 107–109 (GTG), glutamate 138, arginine 142, and asparagine 186 each bind GTP.

This sequence belongs to the FtsZ family. As to quaternary structure, homodimer. Polymerizes to form a dynamic ring structure in a strictly GTP-dependent manner. Interacts directly with several other division proteins.

The protein resides in the cytoplasm. Essential cell division protein that forms a contractile ring structure (Z ring) at the future cell division site. The regulation of the ring assembly controls the timing and the location of cell division. One of the functions of the FtsZ ring is to recruit other cell division proteins to the septum to produce a new cell wall between the dividing cells. Binds GTP and shows GTPase activity. In Buchnera aphidicola subsp. Acyrthosiphon pisum (strain APS) (Acyrthosiphon pisum symbiotic bacterium), this protein is Cell division protein FtsZ.